Consider the following 513-residue polypeptide: Glucose-1-phosphate adenylyltransferase small subunit, chloroplastic/amyloplastic (513 aa).

The N-terminal 64 residues, 1 to 64 (MAMAAAASPS…RRPFFFSPRA (64 aa)), are a transit peptide targeting the chloroplast.

This sequence belongs to the bacterial/plant glucose-1-phosphate adenylyltransferase family. Heterotetramer. In terms of tissue distribution, leaves and starchy endosperm.

It is found in the plastid. The protein localises to the chloroplast. It localises to the amyloplast. It catalyses the reaction alpha-D-glucose 1-phosphate + ATP + H(+) = ADP-alpha-D-glucose + diphosphate. It participates in glycan biosynthesis; starch biosynthesis. Its activity is regulated as follows. Activated by 3'phosphoglycerate, inhibited by orthophosphate. Allosteric regulation. Functionally, this protein plays a role in synthesis of starch. It catalyzes the synthesis of the activated glycosyl donor, ADP-glucose from Glc-1-P and ATP. This is Glucose-1-phosphate adenylyltransferase small subunit, chloroplastic/amyloplastic from Hordeum vulgare (Barley).